Consider the following 333-residue polypeptide: Ornithine carbamoyltransferase (333 aa).

Residues Ser56 to Thr59, Arg107, and His134 to Gln137 each bind carbamoyl phosphate. Residues Asn167, Asp231, and Ser235–Met236 each bind L-ornithine. Residues Cys273–Leu274 and Arg318 each bind carbamoyl phosphate.

This sequence belongs to the aspartate/ornithine carbamoyltransferase superfamily. OTCase family.

The protein localises to the cytoplasm. It carries out the reaction carbamoyl phosphate + L-ornithine = L-citrulline + phosphate + H(+). It functions in the pathway amino-acid degradation; L-arginine degradation via ADI pathway; carbamoyl phosphate from L-arginine: step 2/2. In terms of biological role, reversibly catalyzes the transfer of the carbamoyl group from carbamoyl phosphate (CP) to the N(epsilon) atom of ornithine (ORN) to produce L-citrulline. This Clostridium botulinum (strain Kyoto / Type A2) protein is Ornithine carbamoyltransferase.